The sequence spans 432 residues: Asparagine--tRNA ligase 2 (432 aa).

This sequence belongs to the class-II aminoacyl-tRNA synthetase family. Homodimer.

It localises to the cytoplasm. The enzyme catalyses tRNA(Asn) + L-asparagine + ATP = L-asparaginyl-tRNA(Asn) + AMP + diphosphate + H(+). This Lactiplantibacillus plantarum (strain ATCC BAA-793 / NCIMB 8826 / WCFS1) (Lactobacillus plantarum) protein is Asparagine--tRNA ligase 2 (asnS2).